A 167-amino-acid polypeptide reads, in one-letter code: Ribosome maturation factor RimM (167 aa).

In terms of domain architecture, PRC barrel spans E94–L165.

Belongs to the RimM family. In terms of assembly, binds ribosomal protein uS19.

It is found in the cytoplasm. In terms of biological role, an accessory protein needed during the final step in the assembly of 30S ribosomal subunit, possibly for assembly of the head region. Essential for efficient processing of 16S rRNA. May be needed both before and after RbfA during the maturation of 16S rRNA. It has affinity for free ribosomal 30S subunits but not for 70S ribosomes. The polypeptide is Ribosome maturation factor RimM (Staphylococcus aureus (strain NCTC 8325 / PS 47)).